The following is a 156-amino-acid chain: Arginine repressor (156 aa).

The protein belongs to the ArgR family.

It localises to the cytoplasm. Its pathway is amino-acid biosynthesis; L-arginine biosynthesis [regulation]. Its function is as follows. Regulates arginine biosynthesis genes. The sequence is that of Arginine repressor from Proteus mirabilis (strain HI4320).